A 689-amino-acid polypeptide reads, in one-letter code: Histone-lysine N-methyltransferase MEDEA (689 aa).

3 disordered regions span residues 1–20 (MEKE…LNQI), 51–73 (HQSF…KSLL), and 169–188 (ELSS…EIKK). An interaction with FIE region spans residues 1 to 109 (MEKENHEDDG…DEDQDYALEE (109 aa)). The span at 171–184 (SSEEDEEDEEEDEE) shows a compositional bias: acidic residues. In terms of domain architecture, SANT spans 339-389 (NNTMWTPVEKDLYLKGIEIFGRNSCDVALNILRGLKTCLEIYNYMREQDQC). The region spanning 428-532 (RYPPALKKTT…TLGETPVQIQ (105 aa)) is the CXC domain. Residues 544-659 (KKILIGKSDV…EGEELFFDYC (116 aa)) form the SET domain. Residues 666–689 (DWSRGREPRKTGASKRSKEARPAR) form a disordered region.

Belongs to the class V-like SAM-binding methyltransferase superfamily. Histone-lysine methyltransferase family. EZ subfamily. Interacts directly with FIE via its N-terminal domain. These two proteins are probably indirectly associated with FIS2. In plants, PcG complexes are probably composed of a member of the EZ family (CLF or MEA), FIE, and a member of the VEFS family (FIS2, VRN2 or EMF2). Interacts with TAF13. As to expression, expressed in unpollinated siliques that contain maturing gametophytes. Not expressed at early stages of floral development during early megagametogenesis.

Its subcellular location is the nucleus. The catalysed reaction is L-lysyl(27)-[histone H3] + 3 S-adenosyl-L-methionine = N(6),N(6),N(6)-trimethyl-L-lysyl(27)-[histone H3] + 3 S-adenosyl-L-homocysteine + 3 H(+). Functionally, polycomb group (PcG) protein. Catalytic subunit of some PcG multiprotein complex, which methylates 'Lys-27' of histone H3, leading to transcriptional repression of the affected target genes. Required to prevent the proliferation of the central cell of the female gametophyte by repressing target genes before fertilization. After fertilization, it probably also regulates the embryo and endosperm proliferation and anteroposterior organization during seed development. PcG proteins act by forming multiprotein complexes, which are required to maintain the transcriptionally repressive state of homeotic genes throughout development. PcG proteins are not required to initiate repression, but to maintain it during later stages of development. Interacts with the promoter and repress the transcription of genes such as PHE1 and PHE2, that are paternally active and maternally silenced genes. This Arabidopsis thaliana (Mouse-ear cress) protein is Histone-lysine N-methyltransferase MEDEA (MEA).